We begin with the raw amino-acid sequence, 50 residues long: Inter-alpha-trypsin inhibitor heavy chain H2 (50 aa).

The protein belongs to the ITIH family. In terms of assembly, I-alpha-I plasma protease inhibitors are assembled from one or two heavy chains (HC) and one light chain, bikunin. Inter-alpha-inhibitor (I-alpha-I) is composed of ITIH1/HC1, ITIH2/HC2 and bikunin. In terms of processing, phosphorylated by FAM20C in the extracellular medium.

It is found in the secreted. May act as a carrier of hyaluronan in serum or as a binding protein between hyaluronan and other matrix protein, including those on cell surfaces in tissues to regulate the localization, synthesis and degradation of hyaluronan which are essential to cells undergoing biological processes. The chain is Inter-alpha-trypsin inhibitor heavy chain H2 (ITIH2) from Bos taurus (Bovine).